A 357-amino-acid polypeptide reads, in one-letter code: Putative lipopolysaccharide heptosyltransferase 4 (357 aa).

It catalyses the reaction alpha-D-Glc-(1-&gt;2)-alpha-D-Glc-(1-&gt;3)-[alpha-D-Gal-(1-&gt;6)]-alpha-D-Glc-(1-&gt;3)-[L-alpha-D-Hep-(1-&gt;7)]-4-O-PO3(2-)-L-alpha-D-Hep-(1-&gt;3)-4-O-PO3(2-)-L-alpha-D-Hep-(1-&gt;5)-[alpha-Kdo-(2-&gt;4)]-alpha-Kdo-(2-&gt;6)-lipid A + ADP-L-glycero-beta-D-manno-heptose = lipid A-core + ADP + H(+). The protein operates within bacterial outer membrane biogenesis; LPS core biosynthesis. Functionally, transferase involved in the biosynthesis of the core oligosaccharide region of lipopolysaccharide (LPS). May catalyze the addition of the terminal heptose (heptose IV) to the outer-core glucose III, the last step of the lipid A-core oligosaccharide biosynthesis. This chain is Putative lipopolysaccharide heptosyltransferase 4, found in Escherichia coli (strain K12).